The primary structure comprises 513 residues: uncharacterized protein (513 aa).

13 helical membrane-spanning segments follow: residues 3 to 23 (MTAF…TYFA), 47 to 67 (LAIA…GMIA), 71 to 91 (FDGF…LYIV), 129 to 149 (TFYM…LLGL), 153 to 173 (AAVL…GMIA), 177 to 197 (VQII…IIVF), 233 to 253 (ETLS…HILI), 273 to 293 (WIIG…AAFV), 320 to 340 (FLFA…VTGL), 374 to 394 (ASVA…SLNV), 395 to 415 (AFLV…LIVF), 424 to 444 (ASGA…LVSM), and 462 to 482 (LIPL…GAWL).

It belongs to the sodium:solute symporter (SSF) (TC 2.A.21) family.

The protein localises to the cell membrane. This is an uncharacterized protein from Bacillus subtilis (strain 168).